The sequence spans 371 residues: Repetitive proline-rich cell wall protein 2 (371 aa).

The N-terminal stretch at 1-22 (MASSNLLVLLLFALFAIPRGLA) is a signal peptide. Tandem repeats lie at residues 32–36 (PPVYK), 37–41 (PPVEK), 42–46 (PPVYK), 47–51 (PPVEK), 52–56 (PPVYK), 57–61 (PPVEK), 62–66 (PPVYK), 67–71 (PPVEK), 72–76 (PPVYK), 77–81 (PPVEK), 82–86 (PPVYK), 87–91 (PPVEK), 92–96 (PPVYK), 97–101 (PPVEK), 102–106 (PPVYK), 107–111 (PPVEK), 112–116 (PPVYK), 117–121 (PPVEK), 122–126 (PPVYK), 127–131 (PPVEK), 132–136 (PPVYK), 137–141 (PPVEK), 142–146 (PPVYK), 147–151 (PPVEK), 152–156 (PPVYK), 157–161 (PPVEK), 162–166 (PPVYK), 167–171 (PPVEK), 172–176 (PPVYK), 177–181 (PPVEK), 182–186 (PPVYK), 187–191 (PPVEK), 192–196 (PPVYK), 197–201 (PPVEK), 202–206 (PPVYK), 207–211 (PPVEK), 212–216 (PPVYK), 217–221 (PPVEK), 222–226 (PPVYK), 227–231 (PPVEK), 232–236 (PPIYK), 237–241 (PPVEK), 242–246 (PPVYK), 247–251 (PPVEK), 252–256 (PPVYK), 257–261 (PPVEK), 262–266 (PPIYK), 267–271 (PPVEK), 272–276 (PPVYK), 277–281 (PPVEK), 282–286 (PPVYK), 287–291 (PPVEK), 292–296 (PPVYK), 297–301 (PPVEK), 302–306 (PPVYK), 307–311 (PPVEK), 312–316 (PPVYK), 317–321 (PPVYK), 322–326 (PPVYK), 327–331 (PPVEK), 332–336 (PPVYK), 337–341 (PPVYK), 342–346 (PPVEK), 347–351 (PPVYK), 352–356 (PPVYK), and 357–361 (PPVEK). The tract at residues 32–366 (PPVYKPPVEK…PPVEKPPVYG (335 aa)) is 67 X 5 AA approximate tandem repeats of P-P-[IV]-[EY]-K. Positions 49 to 317 (VEKPPVYKPP…PVEKPPVYKP (269 aa)) are disordered. Positions 339–371 (VYKPPVEKPPVYKPPVYKPPVEKPPVYGPPHHP) are disordered. A 67; approximate repeat occupies 362–366 (PPVYG).

It belongs to the plant proline-rich protein superfamily. ENOD12 family. As to expression, expressed in hypocotyls, roots and mature root nodules.

The protein resides in the secreted. It is found in the cell wall. Its function is as follows. This is a developmentally regulated putative cell wall protein. This Medicago truncatula (Barrel medic) protein is Repetitive proline-rich cell wall protein 2 (PRP2).